Here is a 264-residue protein sequence, read N- to C-terminus: Putative hydro-lyase RBAM_004300 (264 aa).

This sequence belongs to the D-glutamate cyclase family.

The chain is Putative hydro-lyase RBAM_004300 from Bacillus velezensis (strain DSM 23117 / BGSC 10A6 / LMG 26770 / FZB42) (Bacillus amyloliquefaciens subsp. plantarum).